Reading from the N-terminus, the 423-residue chain is Glutamate-1-semialdehyde 2,1-aminomutase (423 aa).

Residue lysine 262 is modified to N6-(pyridoxal phosphate)lysine.

It belongs to the class-III pyridoxal-phosphate-dependent aminotransferase family. HemL subfamily. In terms of assembly, homodimer. The cofactor is pyridoxal 5'-phosphate.

The protein resides in the cytoplasm. The enzyme catalyses (S)-4-amino-5-oxopentanoate = 5-aminolevulinate. It participates in porphyrin-containing compound metabolism; protoporphyrin-IX biosynthesis; 5-aminolevulinate from L-glutamyl-tRNA(Glu): step 2/2. The chain is Glutamate-1-semialdehyde 2,1-aminomutase from Saccharophagus degradans (strain 2-40 / ATCC 43961 / DSM 17024).